The following is a 270-amino-acid chain: Regulatory protein RecX (270 aa).

Belongs to the RecX family.

It localises to the cytoplasm. Modulates RecA activity. This chain is Regulatory protein RecX, found in Bacillus cytotoxicus (strain DSM 22905 / CIP 110041 / 391-98 / NVH 391-98).